A 249-amino-acid polypeptide reads, in one-letter code: Probable septum site-determining protein MinC (249 aa).

The disordered stretch occupies residues A116–A149. Residues S119 to R130 show a composition bias toward pro residues. Over residues A131–P142 the composition is skewed to low complexity.

This sequence belongs to the MinC family. Interacts with MinD and FtsZ.

Cell division inhibitor that blocks the formation of polar Z ring septums. Rapidly oscillates between the poles of the cell to destabilize FtsZ filaments that have formed before they mature into polar Z rings. Prevents FtsZ polymerization. This chain is Probable septum site-determining protein MinC, found in Xanthomonas campestris pv. campestris (strain B100).